We begin with the raw amino-acid sequence, 446 residues long: Phosphoglucosamine mutase (446 aa).

S88 (phosphoserine intermediate) is an active-site residue. Mg(2+)-binding residues include S88, D231, D233, and D235. S88 is subject to Phosphoserine.

Belongs to the phosphohexose mutase family. Mg(2+) serves as cofactor. In terms of processing, activated by phosphorylation.

It carries out the reaction alpha-D-glucosamine 1-phosphate = D-glucosamine 6-phosphate. Functionally, catalyzes the conversion of glucosamine-6-phosphate to glucosamine-1-phosphate. The chain is Phosphoglucosamine mutase from Methanococcus vannielii (strain ATCC 35089 / DSM 1224 / JCM 13029 / OCM 148 / SB).